Reading from the N-terminus, the 549-residue chain is Cell death protein 4 (549 aa).

In terms of domain architecture, CARD spans Met1–Ile91. Tyr131, Gly162, Gly164, Lys165, Ser166, Val167, Arg273, Thr367, and Tyr369 together coordinate ATP. Positions Arg133–Asp417 constitute an NB-ARC domain. Ser166 contributes to the Mg(2+) binding site.

Associates as an asymmetric homodimer with ced-9. Only one ced-4 molecule within the dimer interacts directly with ced-9. Upon release from ced-9, forms a multimer, known as the apoptosome, and interacts with ced-3; the interaction results in ced-3 autoproteolytic cleavage and activation. Multiple oligomeric states of the apoptosome are observed including hexamers, heptamers and octamers. The hexamers likely represent a pre-mature state of the apoptosome and may contribute to the regulation of ced-3 activation. The apoptosome multimer also interacts with two processed ced-3 to form a stable holoenzyme. Interacts with sex-determining protein fem-1. May form a complex composed of ced-3, ced-4 and mac-1 or of ced-9, ced-4 and mac-1. Within the complex, interacts with mac-1.

The protein resides in the mitochondrion. It is found in the cytoplasm. Its subcellular location is the perinuclear region. Component of the egl-1, ced-9, ced-4 and ced-3 apoptotic signaling cascade required for the initiation of programmed cell death in cells fated to die during embryonic and postembryonic development. During oogenesis, required for germline apoptosis downstream of ced-9 and upstream of ced-3 but independently of egl-1. May regulate germline apoptosis in response to DNA damage, probably downstream of let-60/ras and mpk-1 pathway. Regulates CEP neuron apoptosis in response to high Al(3+) levels. During male tail morphogenesis, promotes apoptosis of the tail-spike cell upstream of ced-3 but independently of egl-1 and ced-9. May play a role in sex-specific cell apoptosis, probably by promoting ced-3-mediated cleavage of sex-determining protein fem-1. During larval development, required for the elimination of transient presynaptic components downstream of egl-1 and ced-9 and upstream of ced-3 apoptotic pathway. Downstream of calreticulin crt-1 and upstream of ced-3 and independently of egl-1 and ced-9, plays a role in the initial steps of axonal regrowth following axotomy. Together with ain-1, a component of the miRNA-induced-silencing complex (miRISC), and probably upstream of ced-3, regulates temporal cell fate patterning during larval development. May play a role in resistance to S.typhimurium-mediated infection. Functionally, plays a major role in programmed cell death. egl-1 binds to and directly inhibits the activity of ced-9, releasing the cell death activator ced-4 from a ced-9/ced-4-containing protein complex and allowing ced-4 to induce caspase ced-3 autoproteolytic cleavage and activation. Also forms a holoenzyme with processed ced-3 enhancing ced-3 activity. In terms of biological role, prevents programmed cell death. The protein is Cell death protein 4 (ced-4) of Caenorhabditis elegans.